The primary structure comprises 471 residues: Trigger factor (471 aa).

The 92-residue stretch at 171–262 folds into the PPIase FKBP-type domain; it reads GDLAIVDYAA…LKEIKFRELP (92 aa). Residues 440 to 471 are disordered; sequence PEGSLSQTEEDTPDDDAEEEAIVDVEATSDEE. Over residues 447–471 the composition is skewed to acidic residues; it reads TEEDTPDDDAEEEAIVDVEATSDEE.

It belongs to the FKBP-type PPIase family. Tig subfamily.

Its subcellular location is the cytoplasm. The catalysed reaction is [protein]-peptidylproline (omega=180) = [protein]-peptidylproline (omega=0). Functionally, involved in protein export. Acts as a chaperone by maintaining the newly synthesized protein in an open conformation. Functions as a peptidyl-prolyl cis-trans isomerase. In Synechocystis sp. (strain ATCC 27184 / PCC 6803 / Kazusa), this protein is Trigger factor (tig).